The chain runs to 242 residues: Lysosomal membrane ascorbate-dependent ferrireductase CYB561A3 (242 aa).

Residues 1 to 4 (MASG) are Cytoplasmic-facing. A helical membrane pass occupies residues 5-25 (WFYLSCMVLGSLGSMCILFTA). The Cytochrome b561 domain maps to 12–219 (VLGSLGSMCI…FGLLVLYVLL (208 aa)). Residues 26-40 (YWMQYWRGGFAWDGT) are Lumenal-facing. A helical membrane pass occupies residues 41–61 (VLMFNWHPVLMVAGMVVLYGA). The heme b site is built by His-47 and Arg-67. Residues 62–81 (ASLVYRLPSSWVGPRLPWKV) are Cytoplasmic-facing. Arg-76 and Lys-80 together coordinate L-ascorbate. Residues 82-102 (LHAALHLLAFTCTVVGLIAVF) traverse the membrane as a helical segment. Heme b-binding positions include His-83, 112–115 (HLYS), and His-117. The Lumenal portion of the chain corresponds to 103-119 (RFHNHSRIAHLYSLHSW). A helical transmembrane segment spans residues 120 to 140 (LGITTVVLFACQWFLGFAVFL). Residues 141–154 (LPWASQWLRSLLKP) are Cytoplasmic-facing. Arg-149 contributes to the L-ascorbate binding site. Residues 155 to 175 (LHVFFGACILSLSITSVISGI) form a helical membrane-spanning segment. Heme b contacts are provided by His-156 and Glu-177. The Lumenal segment spans residues 176-202 (NEKLFFVLKNATKPYSSLPGEAVFANS). Residues 203 to 223 (TGLLVVAFGLLVLYVLLASSW) traverse the membrane as a helical segment. Lys-224 provides a ligand contact to heme b. Residues 224–242 (KRPDPGALTDRQPLLHDRE) are Cytoplasmic-facing.

As to quaternary structure, homodimer. Heme b is required as a cofactor. N-glycosylated. In terms of tissue distribution, present in lung, spleen, thymus and testis. Present at low level in brain, heart, liver and kidney. Expressed in the alveolar macrophages of the lung, in the white pulp of the spleen, widespread in the thymus, and in the Sertoli cells of the testis (at protein level).

Its subcellular location is the late endosome membrane. It localises to the lysosome membrane. The enzyme catalyses Fe(3+)(out) + L-ascorbate(in) = monodehydro-L-ascorbate radical(in) + Fe(2+)(out) + H(+). Its function is as follows. Transmembrane reductase that uses ascorbate as an electron donor in the cytoplasm and transfers electrons across membranes to reduce iron cations Fe(3+) into Fe(2+) in the lumen of the late endosome and lysosome. Reduced iron can then be extruded from the late endosome and lysosome to the cytoplasm by divalent metal-specific transporters. It is therefore most probably involved in endosomal and lysosomal cellular iron homeostasis. The sequence is that of Lysosomal membrane ascorbate-dependent ferrireductase CYB561A3 from Mus musculus (Mouse).